The sequence spans 1054 residues: Acid trehalase (1054 aa).

An N-terminal signal peptide occupies residues 1–21 (MRFKSVFTLLPLLAQLPSGGA). 5 N-linked (GlcNAc...) asparagine glycosylation sites follow: N47, N135, N176, N283, and N307. 448–449 (WD) provides a ligand contact to substrate. N-linked (GlcNAc...) asparagine glycans are attached at residues N493, N513, N570, and N578. The active-site Proton donor is E584. N-linked (GlcNAc...) asparagine glycosylation is found at N618 and N644. Residue 650-651 (KQ) participates in substrate binding. N-linked (GlcNAc...) asparagine glycans are attached at residues N665, N734, N803, N826, N838, N903, N937, N966, and N992.

It belongs to the glycosyl hydrolase 65 family.

The catalysed reaction is alpha,alpha-trehalose + H2O = alpha-D-glucose + beta-D-glucose. This chain is Acid trehalase (treA), found in Emericella nidulans (strain FGSC A4 / ATCC 38163 / CBS 112.46 / NRRL 194 / M139) (Aspergillus nidulans).